The following is a 222-amino-acid chain: Peptide methionine sulfoxide reductase MsrA (222 aa).

Cys60 is a catalytic residue.

The protein belongs to the MsrA Met sulfoxide reductase family.

The catalysed reaction is L-methionyl-[protein] + [thioredoxin]-disulfide + H2O = L-methionyl-(S)-S-oxide-[protein] + [thioredoxin]-dithiol. It carries out the reaction [thioredoxin]-disulfide + L-methionine + H2O = L-methionine (S)-S-oxide + [thioredoxin]-dithiol. Functionally, has an important function as a repair enzyme for proteins that have been inactivated by oxidation. Catalyzes the reversible oxidation-reduction of methionine sulfoxide in proteins to methionine. The sequence is that of Peptide methionine sulfoxide reductase MsrA from Pseudomonas putida (strain W619).